A 356-amino-acid polypeptide reads, in one-letter code: Glutamine synthetase cytosolic isozyme 1-1 (356 aa).

Residues 19 to 99 (IIAEYIWIGG…VMCDCYTPAG (81 aa)) form the GS beta-grasp domain. The region spanning 106–356 (KRHNAAKIFS…IAETTIIWKP (251 aa)) is the GS catalytic domain.

Belongs to the glutamine synthetase family. In terms of assembly, homooctamer. Highly expressed in leaf blades, at intermediate levels in spikelets (rice flower) and at lower levels in roots.

It is found in the cytoplasm. The catalysed reaction is L-glutamate + NH4(+) + ATP = L-glutamine + ADP + phosphate + H(+). High-affinity glutamine synthetase involved in ammonium assimilation. Seems to be a major component of the cytosolic glutamine synthetic pathway in leaf blades. Plays an important role in maintaining carbon and nitrogen metabolic balance during ammonium assimilation in shoots and roots, thus controlling plant growth and development. Plays an important role in maintaining broad range of metabolites and transcripts involved in the maintenance of plant metabolic homeostasis and development of plastid in roots. The chain is Glutamine synthetase cytosolic isozyme 1-1 from Oryza sativa subsp. japonica (Rice).